Reading from the N-terminus, the 459-residue chain is Bifunctional protein GlmU (459 aa).

The interval 1 to 229 (MTNYAIILAA…FDESLGVNDR (229 aa)) is pyrophosphorylase. Residues 8 to 11 (LAAG), lysine 22, glutamine 72, and 77 to 78 (GT) contribute to the UDP-N-acetyl-alpha-D-glucosamine site. Aspartate 102 provides a ligand contact to Mg(2+). 4 residues coordinate UDP-N-acetyl-alpha-D-glucosamine: glycine 139, glutamate 154, asparagine 169, and asparagine 227. Asparagine 227 contacts Mg(2+). The interval 230–250 (VALATAESVMRRRINQKHMVN) is linker. Residues 251–459 (GVSFVNPDAT…KRLPHHPQNK (209 aa)) are N-acetyltransferase. Residues arginine 332 and lysine 350 each contribute to the UDP-N-acetyl-alpha-D-glucosamine site. Histidine 362 functions as the Proton acceptor in the catalytic mechanism. Residues tyrosine 365 and asparagine 376 each coordinate UDP-N-acetyl-alpha-D-glucosamine. Acetyl-CoA is bound by residues alanine 379, 385 to 386 (NY), serine 404, alanine 422, and arginine 439.

The protein in the N-terminal section; belongs to the N-acetylglucosamine-1-phosphate uridyltransferase family. This sequence in the C-terminal section; belongs to the transferase hexapeptide repeat family. In terms of assembly, homotrimer. Mg(2+) serves as cofactor.

The protein resides in the cytoplasm. It catalyses the reaction alpha-D-glucosamine 1-phosphate + acetyl-CoA = N-acetyl-alpha-D-glucosamine 1-phosphate + CoA + H(+). The enzyme catalyses N-acetyl-alpha-D-glucosamine 1-phosphate + UTP + H(+) = UDP-N-acetyl-alpha-D-glucosamine + diphosphate. Its pathway is nucleotide-sugar biosynthesis; UDP-N-acetyl-alpha-D-glucosamine biosynthesis; N-acetyl-alpha-D-glucosamine 1-phosphate from alpha-D-glucosamine 6-phosphate (route II): step 2/2. The protein operates within nucleotide-sugar biosynthesis; UDP-N-acetyl-alpha-D-glucosamine biosynthesis; UDP-N-acetyl-alpha-D-glucosamine from N-acetyl-alpha-D-glucosamine 1-phosphate: step 1/1. It participates in bacterial outer membrane biogenesis; LPS lipid A biosynthesis. Functionally, catalyzes the last two sequential reactions in the de novo biosynthetic pathway for UDP-N-acetylglucosamine (UDP-GlcNAc). The C-terminal domain catalyzes the transfer of acetyl group from acetyl coenzyme A to glucosamine-1-phosphate (GlcN-1-P) to produce N-acetylglucosamine-1-phosphate (GlcNAc-1-P), which is converted into UDP-GlcNAc by the transfer of uridine 5-monophosphate (from uridine 5-triphosphate), a reaction catalyzed by the N-terminal domain. This is Bifunctional protein GlmU from Streptococcus gordonii (strain Challis / ATCC 35105 / BCRC 15272 / CH1 / DL1 / V288).